The chain runs to 256 residues: N-acetyl-D-glucosamine kinase (256 aa).

Residues glycine 4–lysine 11 and glycine 133–valine 140 contribute to the ATP site. Zn(2+) contacts are provided by histidine 157, cysteine 177, cysteine 179, and cysteine 184.

Belongs to the ROK (NagC/XylR) family. NagK subfamily.

The catalysed reaction is N-acetyl-D-glucosamine + ATP = N-acetyl-D-glucosamine 6-phosphate + ADP + H(+). It functions in the pathway cell wall biogenesis; peptidoglycan recycling. Functionally, catalyzes the phosphorylation of N-acetyl-D-glucosamine (GlcNAc) derived from cell-wall degradation, yielding GlcNAc-6-P. This chain is N-acetyl-D-glucosamine kinase (nagK), found in Yersinia pestis bv. Antiqua (strain Nepal516).